The sequence spans 360 residues: NADP-dependent alcohol dehydrogenase 6 (360 aa).

Position 46 (Cys-46) interacts with Zn(2+). Gly-47 and His-51 together coordinate NADP(+). Zn(2+) contacts are provided by His-68, Cys-100, Cys-103, Cys-106, and Cys-114. Position 131 is a phosphoserine (Ser-131). Cys-163 contributes to the Zn(2+) binding site. NADP(+)-binding residues include Leu-188, Gly-190, Ile-191, Ser-210, Arg-211, Lys-215, Cys-250, Ser-252, Thr-255, Asp-256, Ile-275, Ile-277, Tyr-298, Ser-299, Leu-301, and Arg-348. The residue at position 359 (Ser-359) is a Phosphoserine.

Belongs to the zinc-containing alcohol dehydrogenase family. In terms of assembly, homodimer. Zn(2+) serves as cofactor.

Its subcellular location is the cytoplasm. It is found in the nucleus. The catalysed reaction is a primary alcohol + NADP(+) = an aldehyde + NADPH + H(+). It catalyses the reaction (E)-cinnamyl alcohol + NADP(+) = (E)-cinnamaldehyde + NADPH + H(+). It carries out the reaction hexan-1-ol + NADP(+) = hexanal + NADPH + H(+). The enzyme catalyses 3-methylbutanol + NADP(+) = 3-methylbutanal + NADPH + H(+). The catalysed reaction is S-nitroso-CoA + NADPH + H(+) = sulfinamide-CoA + NADP(+). Its function is as follows. NADP-dependent, medium-chain alcohol dehydrogenase with a broad substrate specificity. Aldehydes exhibited 50-12000 times higher catalytic efficiency than the corresponding alcohols, therefore the major function of the enzyme is as an aldehyde reductase. The enzyme is active towards aromatic and aliphatic (linear and branched-chain) aldehydes. The enzyme is very active towards aromatic aldehydes, such as cinnamaldehyde, benzaldehyde and substituted benzaldehydes, such as veratraldehyde and panisaldehyde. It exhibits low activity towards substituted cinnamaldehydes, such as coniferaldehyde and sinapaldehyde. The enzyme has no activity with ketones, such as acetone or cyclohexanone. For the reverse reaction, linear and branched-chain primary alcohols are substrates, whereas very low activity is found with secondary alcohols, such as butan-2-ol. The enzyme may be physiologically involved in several steps of the lignin degradation pathway, initiated by other microorganisms, in the synthesis of fusel alcohols, products derived from the aminoacidic metabolism, and in the homeostasis of NADP(H). Has the ability to reduce 5-hydroxymethyl furfural (HMF), a furan derivative which is formed during the hydrolysis of lignocellulosic materials, to 5-hydroxymethylfurfuryl alcohol, thereby alleviating the inhibition of the fermentation of lignocellulose hydrolysates by HMF during fuel ethanol production. Also acts as an inhibitor of protein S-nitrosylation by mediating degradation of S-nitroso-coenzyme A (S-nitroso-CoA), a cofactor required to S-nitrosylate proteins. This is NADP-dependent alcohol dehydrogenase 6 from Saccharomyces cerevisiae (strain ATCC 204508 / S288c) (Baker's yeast).